The chain runs to 352 residues: Thrombopoietin (352 aa).

Positions 1-23 (MELTELLLVVMLLLTARLDPCLP) are cleaved as a signal peptide. Intrachain disulfides connect Cys-28–Cys-172 and Cys-50–Cys-106. Asn-185, Asn-197, Asn-206, Asn-234, and Asn-255 each carry an N-linked (GlcNAc...) asparagine glycan. The segment covering 233 to 245 (LNQTSRSLNQTPG) has biased composition (polar residues). Disordered regions lie at residues 233 to 259 (LNQT…GTHG) and 292 to 352 (YSPS…SQEE). Positions 311 to 327 (PTSPTPQNPLQPPPPDP) are enriched in pro residues. N-linked (GlcNAc...) asparagine glycosylation is found at Asn-332 and Asn-347.

The protein belongs to the EPO/TPO family.

Its subcellular location is the secreted. Its function is as follows. Lineage-specific cytokine affecting the proliferation and maturation of megakaryocytes from their committed progenitor cells. It acts at a late stage of megakaryocyte development. It may be the major physiological regulator of circulating platelets. The polypeptide is Thrombopoietin (THPO) (Canis lupus familiaris (Dog)).